The following is a 179-amino-acid chain: Peptide deformylase (179 aa).

Fe cation is bound by residues C102 and H144. Residue E145 is part of the active site. H148 contributes to the Fe cation binding site.

Belongs to the polypeptide deformylase family. Requires Fe(2+) as cofactor.

The catalysed reaction is N-terminal N-formyl-L-methionyl-[peptide] + H2O = N-terminal L-methionyl-[peptide] + formate. Removes the formyl group from the N-terminal Met of newly synthesized proteins. Requires at least a dipeptide for an efficient rate of reaction. N-terminal L-methionine is a prerequisite for activity but the enzyme has broad specificity at other positions. The polypeptide is Peptide deformylase (Wolbachia sp. subsp. Drosophila simulans (strain wRi)).